Reading from the N-terminus, the 461-residue chain is Anthranilate synthase component 1 (461 aa).

Residues serine 43 and 238–240 contribute to the L-tryptophan site; that span reads PYM. 273–274 contributes to the chorismate binding site; the sequence is GT. Position 300 (glutamate 300) interacts with Mg(2+). Chorismate-binding positions include tyrosine 388, arginine 408, 422–424, and glycine 424; that span reads GAG. Residue glutamate 437 participates in Mg(2+) binding.

It belongs to the anthranilate synthase component I family. In terms of assembly, heterotetramer consisting of two non-identical subunits: a beta subunit (TrpG) and a large alpha subunit (TrpE). The cofactor is Mg(2+).

It carries out the reaction chorismate + L-glutamine = anthranilate + pyruvate + L-glutamate + H(+). The protein operates within amino-acid biosynthesis; L-tryptophan biosynthesis; L-tryptophan from chorismate: step 1/5. Feedback inhibited by tryptophan. Part of a heterotetrameric complex that catalyzes the two-step biosynthesis of anthranilate, an intermediate in the biosynthesis of L-tryptophan. In the first step, the glutamine-binding beta subunit (TrpG) of anthranilate synthase (AS) provides the glutamine amidotransferase activity which generates ammonia as a substrate that, along with chorismate, is used in the second step, catalyzed by the large alpha subunit of AS (TrpE) to produce anthranilate. In the absence of TrpG, TrpE can synthesize anthranilate directly from chorismate and high concentrations of ammonia. The chain is Anthranilate synthase component 1 (trpE) from Methanothermobacter marburgensis (strain ATCC BAA-927 / DSM 2133 / JCM 14651 / NBRC 100331 / OCM 82 / Marburg) (Methanobacterium thermoautotrophicum).